Consider the following 516-residue polypeptide: Thioredoxin reductase 2, mitochondrial (516 aa).

Residue 62–79 (DYVKPTPVGTKWGIGGTC) participates in FAD binding. Residues C79 and C84 are joined by a disulfide bond. H489 acts as the Proton acceptor in catalysis.

It belongs to the class-I pyridine nucleotide-disulfide oxidoreductase family. In terms of assembly, homodimer. FAD serves as cofactor.

The protein resides in the mitochondrion. It catalyses the reaction [thioredoxin]-dithiol + NADP(+) = [thioredoxin]-disulfide + NADPH + H(+). In terms of biological role, thioredoxin system is a major player in glutathione metabolism, due to the demonstrated absence of a glutathione reductase. Functionally interacts with the Sod/Cat reactive oxidation species (ROS) defense system and thereby has a role in preadult development and life span. Lack of a glutathione reductase suggests antioxidant defense in Drosophila, and probably in related insects, differs fundamentally from that in other organisms. The sequence is that of Thioredoxin reductase 2, mitochondrial from Drosophila melanogaster (Fruit fly).